The primary structure comprises 120 residues: MDYEFLRDITGVVKVRMSMGHEVVGHWFNEEVKENLALLDEVEQAAHALKGSERSWQRAGHEYTLWMDAEEVMVRANQLEFAGDEMEEGMNYYDEESLSLCGVEDFLQVVAAYRNFVQQK.

Belongs to the UPF0231 family.

This is UPF0231 protein YacL (yacL) from Shigella flexneri.